We begin with the raw amino-acid sequence, 281 residues long: 2,3,4,5-tetrahydropyridine-2,6-dicarboxylate N-succinyltransferase (281 aa).

Belongs to the transferase hexapeptide repeat family.

The protein localises to the cytoplasm. It catalyses the reaction (S)-2,3,4,5-tetrahydrodipicolinate + succinyl-CoA + H2O = (S)-2-succinylamino-6-oxoheptanedioate + CoA. The protein operates within amino-acid biosynthesis; L-lysine biosynthesis via DAP pathway; LL-2,6-diaminopimelate from (S)-tetrahydrodipicolinate (succinylase route): step 1/3. The polypeptide is 2,3,4,5-tetrahydropyridine-2,6-dicarboxylate N-succinyltransferase (Methylobacterium sp. (strain 4-46)).